The sequence spans 272 residues: HMP-PP phosphatase (272 aa).

Asp-8 (nucleophile) is an active-site residue. Asp-8, Asp-10, and Asp-212 together coordinate Mg(2+).

It belongs to the HAD-like hydrolase superfamily. Cof family. The cofactor is Mg(2+).

The enzyme catalyses 4-amino-2-methyl-5-(diphosphooxymethyl)pyrimidine + H2O = 4-amino-2-methyl-5-(phosphooxymethyl)pyrimidine + phosphate + H(+). Its function is as follows. Catalyzes the hydrolysis of 4-amino-2-methyl-5-hydroxymethylpyrimidine pyrophosphate (HMP-PP) to 4-amino-2-methyl-5-hydroxymethylpyrimidine phosphate (HMP-P). In Cronobacter sakazakii (strain ATCC BAA-894) (Enterobacter sakazakii), this protein is HMP-PP phosphatase.